We begin with the raw amino-acid sequence, 286 residues long: MTAQNIDGTLISQTVRSEVAARVKARVQAGLRAPGLAVVLVGEDPASQVYVGSKRRACEEVGFVSKSFDLPATASEEALLSLVEELNNDPQIDGILVQLPLPAGMDTTKVLESIHPEKDVDGFHPYNVGRLAQRIPKLRSCTPKGIITLLERYNIPLRGKHAVIVGASNIVGRPMTLELLLAGCTTTTCHRFTQDLEGHIRQADILVVAVGKPNFIPGAWIKEGAVVVDVGINRLDTGKLVGDVEYDVARTRASFITPVPGGVGPMTVASLIENTMMACEQFHTQG.

Residues 166 to 168 (GAS) and Ile-232 each bind NADP(+).

This sequence belongs to the tetrahydrofolate dehydrogenase/cyclohydrolase family. Homodimer.

The catalysed reaction is (6R)-5,10-methylene-5,6,7,8-tetrahydrofolate + NADP(+) = (6R)-5,10-methenyltetrahydrofolate + NADPH. The enzyme catalyses (6R)-5,10-methenyltetrahydrofolate + H2O = (6R)-10-formyltetrahydrofolate + H(+). It functions in the pathway one-carbon metabolism; tetrahydrofolate interconversion. In terms of biological role, catalyzes the oxidation of 5,10-methylenetetrahydrofolate to 5,10-methenyltetrahydrofolate and then the hydrolysis of 5,10-methenyltetrahydrofolate to 10-formyltetrahydrofolate. The chain is Bifunctional protein FolD from Vibrio cholerae serotype O1 (strain ATCC 39541 / Classical Ogawa 395 / O395).